The sequence spans 257 residues: Small ribosomal subunit protein uS2 (257 aa).

The protein belongs to the universal ribosomal protein uS2 family.

The polypeptide is Small ribosomal subunit protein uS2 (Ruegeria pomeroyi (strain ATCC 700808 / DSM 15171 / DSS-3) (Silicibacter pomeroyi)).